The primary structure comprises 244 residues: MATNPMNQFEVYRIGPEIKLGAIDISFTNASLFMVISSLAILLIFNLGSKKNSLLPSKMQLLSELSYTFVSKMISDTAGSKAKPYFAFIFSIFMFVLFCNMFGMIPYAFTVTSHIIVTFILASFIFVGVTIIGFMKHGLGYLKLFVPSGVPAVLLPLIVVIEIISYLSRPVSLSVRLFANMMAGHTMMKVFGGFVISLGIVGGWLPLSFSVALTGLEILVAFLQAYVFAILTCIYLNDALNLHH.

6 helical membrane passes run 25–45 (ISFT…LLIF), 85–105 (YFAF…FGMI), 115–135 (IIVT…IGFM), 144–164 (LFVP…IEII), 193–213 (GFVI…SVAL), and 216–236 (LEIL…CIYL).

Belongs to the ATPase A chain family. F-type ATPases have 2 components, CF(1) - the catalytic core - and CF(0) - the membrane proton channel. CF(1) has five subunits: alpha(3), beta(3), gamma(1), delta(1), epsilon(1). CF(0) has three main subunits: a(1), b(2) and c(9-12). The alpha and beta chains form an alternating ring which encloses part of the gamma chain. CF(1) is attached to CF(0) by a central stalk formed by the gamma and epsilon chains, while a peripheral stalk is formed by the delta and b chains.

The protein localises to the cell inner membrane. Functionally, key component of the proton channel; it plays a direct role in the translocation of protons across the membrane. In Pelagibacter ubique (strain HTCC1062), this protein is ATP synthase subunit a.